Reading from the N-terminus, the 274-residue chain is Dermonecrotic toxin LspiSicTox-betaIII2 (274 aa).

The active site involves histidine 5. Mg(2+) is bound by residues glutamate 25 and aspartate 27. The active-site Nucleophile is the histidine 41. 2 cysteine pairs are disulfide-bonded: cysteine 45–cysteine 51 and cysteine 47–cysteine 189. Residue aspartate 85 coordinates Mg(2+).

Belongs to the arthropod phospholipase D family. Class II subfamily. It depends on Mg(2+) as a cofactor. In terms of tissue distribution, expressed by the venom gland.

The protein localises to the secreted. It carries out the reaction an N-(acyl)-sphingosylphosphocholine = an N-(acyl)-sphingosyl-1,3-cyclic phosphate + choline. The enzyme catalyses an N-(acyl)-sphingosylphosphoethanolamine = an N-(acyl)-sphingosyl-1,3-cyclic phosphate + ethanolamine. The catalysed reaction is a 1-acyl-sn-glycero-3-phosphocholine = a 1-acyl-sn-glycero-2,3-cyclic phosphate + choline. It catalyses the reaction a 1-acyl-sn-glycero-3-phosphoethanolamine = a 1-acyl-sn-glycero-2,3-cyclic phosphate + ethanolamine. Functionally, dermonecrotic toxins cleave the phosphodiester linkage between the phosphate and headgroup of certain phospholipids (sphingolipid and lysolipid substrates), forming an alcohol (often choline) and a cyclic phosphate. This toxin acts on sphingomyelin (SM). It may also act on ceramide phosphoethanolamine (CPE), lysophosphatidylcholine (LPC) and lysophosphatidylethanolamine (LPE), but not on lysophosphatidylserine (LPS), and lysophosphatidylglycerol (LPG). It acts by transphosphatidylation, releasing exclusively cyclic phosphate products as second products. Induces dermonecrosis, hemolysis, increased vascular permeability, edema, inflammatory response, and platelet aggregation. This chain is Dermonecrotic toxin LspiSicTox-betaIII2, found in Loxosceles spinulosa (Recluse spider).